We begin with the raw amino-acid sequence, 153 residues long: Aspartate carbamoyltransferase regulatory chain (153 aa).

Residues Cys109, Cys114, Cys138, and Cys141 each contribute to the Zn(2+) site.

The protein belongs to the PyrI family. In terms of assembly, contains catalytic and regulatory chains. Requires Zn(2+) as cofactor.

Its function is as follows. Involved in allosteric regulation of aspartate carbamoyltransferase. This Escherichia coli (strain ATCC 8739 / DSM 1576 / NBRC 3972 / NCIMB 8545 / WDCM 00012 / Crooks) protein is Aspartate carbamoyltransferase regulatory chain.